The primary structure comprises 223 residues: Small ribosomal subunit protein uS3 (223 aa).

A KH type-2 domain is found at 39–108 (IRNFVKKNSY…NILINIVEVK (70 aa)).

It belongs to the universal ribosomal protein uS3 family. As to quaternary structure, part of the 30S ribosomal subunit. Forms a tight complex with proteins S10 and S14.

Its function is as follows. Binds the lower part of the 30S subunit head. Binds mRNA in the 70S ribosome, positioning it for translation. This chain is Small ribosomal subunit protein uS3, found in Clostridium botulinum (strain Okra / Type B1).